Consider the following 604-residue polypeptide: Glutamine--fructose-6-phosphate aminotransferase [isomerizing] (604 aa).

The active-site Nucleophile; for GATase activity is cysteine 2. Residues 2–218 enclose the Glutamine amidotransferase type-2 domain; the sequence is CGIVGVVGNR…DKELVILTKD (217 aa). 2 consecutive SIS domains span residues 284 to 423 and 452 to 594; these read IITS…ANGK and VAEK…VDKP. The For Fru-6P isomerization activity role is filled by lysine 599.

Homodimer.

It localises to the cytoplasm. The catalysed reaction is D-fructose 6-phosphate + L-glutamine = D-glucosamine 6-phosphate + L-glutamate. Catalyzes the first step in hexosamine metabolism, converting fructose-6P into glucosamine-6P using glutamine as a nitrogen source. The polypeptide is Glutamine--fructose-6-phosphate aminotransferase [isomerizing] (Streptococcus pyogenes serotype M3 (strain ATCC BAA-595 / MGAS315)).